The sequence spans 291 residues: Probable alpha-L-glutamate ligase (291 aa).

One can recognise an ATP-grasp domain in the interval His104–Glu287. Residues Lys141, Glu178 to Phe179, Asp187, and Arg211 to Asn213 each bind ATP. Mg(2+)-binding residues include Asp248, Glu260, and Asn262. Mn(2+) is bound by residues Asp248, Glu260, and Asn262.

It belongs to the RimK family. Requires Mg(2+) as cofactor. The cofactor is Mn(2+).

The polypeptide is Probable alpha-L-glutamate ligase (Xanthomonas campestris pv. campestris (strain 8004)).